Consider the following 395-residue polypeptide: Elongation factor Tu (395 aa).

One can recognise a tr-type G domain in the interval 10-204; that stretch reads KSHVNIGTIG…AVDEYIPTPE (195 aa). The G1 stretch occupies residues 19–26; that stretch reads GHVDHGKT. 19 to 26 is a GTP binding site; it reads GHVDHGKT. T26 is a binding site for Mg(2+). The tract at residues 60–64 is G2; sequence GITIN. Positions 81–84 are G3; the sequence is DCPG. Residues 81-85 and 136-139 contribute to the GTP site; these read DCPGH and NKMD. The interval 136 to 139 is G4; that stretch reads NKMD. The G5 stretch occupies residues 174–176; sequence SAL.

This sequence belongs to the TRAFAC class translation factor GTPase superfamily. Classic translation factor GTPase family. EF-Tu/EF-1A subfamily. In terms of assembly, monomer.

It localises to the cytoplasm. The enzyme catalyses GTP + H2O = GDP + phosphate + H(+). Its function is as follows. GTP hydrolase that promotes the GTP-dependent binding of aminoacyl-tRNA to the A-site of ribosomes during protein biosynthesis. The sequence is that of Elongation factor Tu from Enterococcus faecalis (strain ATCC 700802 / V583).